Consider the following 73-residue polypeptide: UPF0352 protein APL_0584 (73 aa).

This sequence belongs to the UPF0352 family.

The protein is UPF0352 protein APL_0584 of Actinobacillus pleuropneumoniae serotype 5b (strain L20).